Consider the following 1083-residue polypeptide: Ubiquitin-protein ligase E3C (1083 aa).

Basic and acidic residues-rich tracts occupy residues methionine 1–threonine 10 and serine 20–glutamate 40. Residues methionine 1 to glutamate 40 are disordered. The tract at residues methionine 1–arginine 60 is cis-determinant of acceptor ubiquitin-binding. An IQ domain is found at arginine 45 to aspartate 74. The interval serine 355–arginine 385 is disordered. Basic and acidic residues predominate over residues alanine 375–arginine 385. One can recognise an HECT domain in the interval asparagine 744–serine 1083. Lysine 903 participates in a covalent cross-link: Glycyl lysine isopeptide (Lys-Gly) (interchain with G-Cter in ubiquitin); by autocatalysis. The Glycyl thioester intermediate role is filled by cysteine 1051.

This sequence belongs to the UBE3C family. As to quaternary structure, interacts with 26S proteasomes. Interacts (via the HECT domain) with UBE2D1 and, less efficiently, with UBE2L3. In terms of processing, autoubiquitinated; promoting its own degradation. In terms of tissue distribution, highly expressed in skeletal muscle. Detected at much lower levels in kidney and pancreas.

It carries out the reaction S-ubiquitinyl-[E2 ubiquitin-conjugating enzyme]-L-cysteine + [acceptor protein]-L-lysine = [E2 ubiquitin-conjugating enzyme]-L-cysteine + N(6)-ubiquitinyl-[acceptor protein]-L-lysine.. It participates in protein modification; protein ubiquitination. E3 ubiquitin-protein ligase that specifically catalyzes 'Lys-29'- and 'Lys-48'-linked polyubiquitin chains. Accepts ubiquitin from the E2 ubiquitin-conjugating enzyme UBE2D1 in the form of a thioester and then directly transfers the ubiquitin to targeted substrates. Associates with the proteasome and promotes elongation of ubiquitin chains on substrates bound to the 26S proteasome. Also catalyzes 'Lys-29'- and 'Lys-48'-linked ubiquitination of 26S proteasome subunit ADRM1/RPN13 in response to proteotoxic stress, impairing the ability of the proteasome to bind and degrade ubiquitin-conjugated proteins. Acts as a negative regulator of autophagy by mediating 'Lys-29'- and 'Lys-48'-linked ubiquitination of PIK3C3/VPS34, promoting its degradation. Can assemble unanchored poly-ubiquitin chains in either 'Lys-29'- or 'Lys-48'-linked polyubiquitin chains; with some preference for 'Lys-48' linkages. Acts as a negative regulator of type I interferon by mediating 'Lys-48'-linked ubiquitination of IRF3 and IRF7, leading to their degradation by the proteasome. Catalyzes ubiquitination and degradation of CAND2. The sequence is that of Ubiquitin-protein ligase E3C from Homo sapiens (Human).